We begin with the raw amino-acid sequence, 336 residues long: Holliday junction branch migration complex subunit RuvB (336 aa).

The tract at residues 4–185 (ADRLISADIQ…FGIVQRLEFY (182 aa)) is large ATPase domain (RuvB-L). ATP-binding positions include Ile24, Arg25, Gly66, Lys69, Thr70, Thr71, 132–134 (EDY), Arg175, Tyr185, and Arg222. Mg(2+) is bound at residue Thr70. Positions 186-256 (NVDDLQHIVA…IASKALDMLN (71 aa)) are small ATPAse domain (RuvB-S). Positions 259–336 (AAGFDYLDRK…RHFNRIMEAP (78 aa)) are head domain (RuvB-H). 3 residues coordinate DNA: Arg295, Arg314, and Arg319.

It belongs to the RuvB family. In terms of assembly, homohexamer. Forms an RuvA(8)-RuvB(12)-Holliday junction (HJ) complex. HJ DNA is sandwiched between 2 RuvA tetramers; dsDNA enters through RuvA and exits via RuvB. An RuvB hexamer assembles on each DNA strand where it exits the tetramer. Each RuvB hexamer is contacted by two RuvA subunits (via domain III) on 2 adjacent RuvB subunits; this complex drives branch migration. In the full resolvosome a probable DNA-RuvA(4)-RuvB(12)-RuvC(2) complex forms which resolves the HJ.

The protein resides in the cytoplasm. The enzyme catalyses ATP + H2O = ADP + phosphate + H(+). Functionally, the RuvA-RuvB-RuvC complex processes Holliday junction (HJ) DNA during genetic recombination and DNA repair, while the RuvA-RuvB complex plays an important role in the rescue of blocked DNA replication forks via replication fork reversal (RFR). RuvA specifically binds to HJ cruciform DNA, conferring on it an open structure. The RuvB hexamer acts as an ATP-dependent pump, pulling dsDNA into and through the RuvAB complex. RuvB forms 2 homohexamers on either side of HJ DNA bound by 1 or 2 RuvA tetramers; 4 subunits per hexamer contact DNA at a time. Coordinated motions by a converter formed by DNA-disengaged RuvB subunits stimulates ATP hydrolysis and nucleotide exchange. Immobilization of the converter enables RuvB to convert the ATP-contained energy into a lever motion, pulling 2 nucleotides of DNA out of the RuvA tetramer per ATP hydrolyzed, thus driving DNA branch migration. The RuvB motors rotate together with the DNA substrate, which together with the progressing nucleotide cycle form the mechanistic basis for DNA recombination by continuous HJ branch migration. Branch migration allows RuvC to scan DNA until it finds its consensus sequence, where it cleaves and resolves cruciform DNA. This chain is Holliday junction branch migration complex subunit RuvB, found in Proteus mirabilis (strain HI4320).